Here is a 256-residue protein sequence, read N- to C-terminus: Thiazole synthase (256 aa).

Residue Lys-95 is the Schiff-base intermediate with DXP of the active site. 1-deoxy-D-xylulose 5-phosphate is bound by residues Gly-156, 182–183, and 204–205; these read AG and NT.

It belongs to the ThiG family. As to quaternary structure, homotetramer. Forms heterodimers with either ThiH or ThiS.

Its subcellular location is the cytoplasm. It catalyses the reaction [ThiS sulfur-carrier protein]-C-terminal-Gly-aminoethanethioate + 2-iminoacetate + 1-deoxy-D-xylulose 5-phosphate = [ThiS sulfur-carrier protein]-C-terminal Gly-Gly + 2-[(2R,5Z)-2-carboxy-4-methylthiazol-5(2H)-ylidene]ethyl phosphate + 2 H2O + H(+). It functions in the pathway cofactor biosynthesis; thiamine diphosphate biosynthesis. Catalyzes the rearrangement of 1-deoxy-D-xylulose 5-phosphate (DXP) to produce the thiazole phosphate moiety of thiamine. Sulfur is provided by the thiocarboxylate moiety of the carrier protein ThiS. In vitro, sulfur can be provided by H(2)S. The polypeptide is Thiazole synthase (Salmonella agona (strain SL483)).